The primary structure comprises 320 residues: Ribonuclease Z (320 aa).

The Zn(2+) site is built by His63, His65, Asp67, His68, His141, Asp212, and His270. Asp67 functions as the Proton acceptor in the catalytic mechanism.

It belongs to the RNase Z family. In terms of assembly, homodimer. Requires Zn(2+) as cofactor.

It carries out the reaction Endonucleolytic cleavage of RNA, removing extra 3' nucleotides from tRNA precursor, generating 3' termini of tRNAs. A 3'-hydroxy group is left at the tRNA terminus and a 5'-phosphoryl group is left at the trailer molecule.. Functionally, zinc phosphodiesterase, which displays some tRNA 3'-processing endonuclease activity. Probably involved in tRNA maturation, by removing a 3'-trailer from precursor tRNA. The chain is Ribonuclease Z from Lacticaseibacillus casei (strain BL23) (Lactobacillus casei).